Reading from the N-terminus, the 273-residue chain is Putative pyruvate, phosphate dikinase regulatory protein (273 aa).

An ADP-binding site is contributed by 149–156; sequence GPSRTSKT.

Belongs to the pyruvate, phosphate/water dikinase regulatory protein family. PDRP subfamily.

It carries out the reaction N(tele)-phospho-L-histidyl/L-threonyl-[pyruvate, phosphate dikinase] + ADP = N(tele)-phospho-L-histidyl/O-phospho-L-threonyl-[pyruvate, phosphate dikinase] + AMP + H(+). The enzyme catalyses N(tele)-phospho-L-histidyl/O-phospho-L-threonyl-[pyruvate, phosphate dikinase] + phosphate + H(+) = N(tele)-phospho-L-histidyl/L-threonyl-[pyruvate, phosphate dikinase] + diphosphate. Functionally, bifunctional serine/threonine kinase and phosphorylase involved in the regulation of the pyruvate, phosphate dikinase (PPDK) by catalyzing its phosphorylation/dephosphorylation. This Rickettsia africae (strain ESF-5) protein is Putative pyruvate, phosphate dikinase regulatory protein.